The primary structure comprises 123 residues: Hydrogenase maturation factor HypA (123 aa).

Residue histidine 2 coordinates Ni(2+). Residues cysteine 77, cysteine 80, cysteine 96, and cysteine 99 each contribute to the Zn(2+) site.

The protein belongs to the HypA/HybF family.

Its function is as follows. Involved in the maturation of [NiFe] hydrogenases. Required for nickel insertion into the metal center of the hydrogenase. This is Hydrogenase maturation factor HypA from Methanococcus aeolicus (strain ATCC BAA-1280 / DSM 17508 / OCM 812 / Nankai-3).